The primary structure comprises 180 residues: Minor allergen Can f 2 (180 aa).

The N-terminal stretch at 1–18 (MQLLLLTVGLALICGLQA) is a signal peptide. Asn-45 carries an N-linked (GlcNAc...) asparagine glycan. Residues Cys-82 and Cys-175 are joined by a disulfide bond.

The protein belongs to the calycin superfamily. Lipocalin family. Tongue epithelial tissue and parotid gland.

The protein resides in the secreted. This is Minor allergen Can f 2 from Canis lupus familiaris (Dog).